The sequence spans 753 residues: Inactive protein-tyrosine phosphatase egg-4 (753 aa).

Disordered regions lie at residues 26-46 (TSLQ…STDN) and 75-145 (SFRK…SGHG). Low complexity predominate over residues 35 to 46 (NTDDSSADSTDN). Basic and acidic residues-rich tracts occupy residues 84-94 (AQKDRRSKERL) and 129-145 (VSEK…SGHG). A Tyrosine-protein phosphatase domain is found at 408 to 661 (MERRFEILEN…IFVHRLVAFF (254 aa)).

Belongs to the protein-tyrosine phosphatase family. Part of a complex, consisting of pseudophosphatases egg-3, egg-4, egg-5 and kinase mbk-2; this complex is required for the oocyte-to-zygote transition. Interacts (via tyrosine-protein phosphatase domain) with kinase mbk-2 (via 'Tyr-619' and 'Tyr-621'); mbk-2 tyrosine phosphorylation enhances the interaction. The interaction inhibits mbk-2 kinase activity and is required for mbk-2 oocyte cortex localization. Interacts with egg-3.

The protein resides in the cytoplasm. The protein localises to the cell cortex. Inactive phosphatase which acts redundantly with egg-5 in the oocyte-to-zygote transition. Required for the polarization of cortical actin cytoskeleton rearrangement in the oocyte before and after fertilization. Together with egg-5, required for the cortical localization of kinase mbk-2 and for the inhibition of mbk-2 kinase activity in maturing oocyte until the end of meiosis I. Also required for kinase mbk-2, pseudophosphatase egg-3 and chitin synthase chs-1 localization to cytoplasmic foci after fertilization. In Caenorhabditis elegans, this protein is Inactive protein-tyrosine phosphatase egg-4.